We begin with the raw amino-acid sequence, 236 residues long: Probable methylthioribulose-1-phosphate dehydratase (236 aa).

A disordered region spans residues M1–H29. C103 is a binding site for substrate. Residues H121, H123, and H201 each contribute to the Zn(2+) site.

It belongs to the aldolase class II family. MtnB subfamily. It depends on Zn(2+) as a cofactor.

It is found in the cytoplasm. It carries out the reaction 5-(methylsulfanyl)-D-ribulose 1-phosphate = 5-methylsulfanyl-2,3-dioxopentyl phosphate + H2O. It participates in amino-acid biosynthesis; L-methionine biosynthesis via salvage pathway; L-methionine from S-methyl-5-thio-alpha-D-ribose 1-phosphate: step 2/6. Its function is as follows. Catalyzes the dehydration of methylthioribulose-1-phosphate (MTRu-1-P) into 2,3-diketo-5-methylthiopentyl-1-phosphate (DK-MTP-1-P). The sequence is that of Probable methylthioribulose-1-phosphate dehydratase from Trichoplax adhaerens (Trichoplax reptans).